The sequence spans 61 residues: DNA gyrase inhibitor YacG (61 aa).

C14, C17, C29, and C33 together coordinate Zn(2+).

The protein belongs to the DNA gyrase inhibitor YacG family. Interacts with GyrB. Zn(2+) serves as cofactor.

Functionally, inhibits all the catalytic activities of DNA gyrase by preventing its interaction with DNA. Acts by binding directly to the C-terminal domain of GyrB, which probably disrupts DNA binding by the gyrase. This chain is DNA gyrase inhibitor YacG, found in Zymomonas mobilis subsp. mobilis (strain ATCC 31821 / ZM4 / CP4).